Consider the following 106-residue polypeptide: PAT complex subunit Asterix (106 aa).

Residues 1–29 (MSANNMSDPRRPNKVLRYKPPPSECNPAL) form a disordered region. An N-acetylserine modification is found at Ser2. Residues 2 to 32 (SANNMSDPRRPNKVLRYKPPPSECNPALDDP) lie on the Cytoplasmic side of the membrane. A helical membrane pass occupies residues 33 to 51 (TPDYMNLLGMIFSMCGLML). Lys52 is a topological domain (lumenal). A helical transmembrane segment spans residues 53–70 (LKWCAWVAVYCSFISFAN). Topologically, residues 71–74 (SRSS) are cytoplasmic. Residues 75-95 (EDTKQMMSSFMLSISAVVMSY) traverse the membrane as a helical segment. Residues 96–106 (LQNPQPMTPPW) are Lumenal-facing.

The protein belongs to the Asterix family. Component of the PAT complex, composed of WDR83OS/Asterix and CCDC47. The PAT complex is part of the multi-pass translocon (MPT) complex, composed of three subcomplexes, the GEL complex (composed of RAB5IF/OPTI and TMCO1), the BOS complex (composed of NCLN/Nicalin, NOMO1 and TMEM147) and the PAT complex (composed of WDR83OS/Asterix and CCDC47). The MPT complex associates with the SEC61 complex.

It localises to the endoplasmic reticulum membrane. Component of the multi-pass translocon (MPT) complex that mediates insertion of multi-pass membrane proteins into the lipid bilayer of membranes. The MPT complex takes over after the SEC61 complex: following membrane insertion of the first few transmembrane segments of proteins by the SEC61 complex, the MPT complex occludes the lateral gate of the SEC61 complex to promote insertion of subsequent transmembrane regions. Within the MPT complex, the PAT subcomplex sequesters any highly polar regions in the transmembrane domains away from the non-polar membrane environment until they can be buried in the interior of the fully assembled protein. Within the PAT subcomplex, WDR83OS/Asterix binds to and redirects the substrate to a location behind the SEC61 complex. The chain is PAT complex subunit Asterix (WDR83OS) from Bos taurus (Bovine).